Here is a 120-residue protein sequence, read N- to C-terminus: Membrane-anchored ubiquitin-fold protein 5 (120 aa).

The Ubiquitin-like domain maps to 7–72 (IELKFRLADG…ILENNKTLSE (66 aa)). The S-palmitoyl cysteine moiety is linked to residue Cys-115. At Cys-117 the chain carries Cysteine methyl ester. A lipid anchor (S-geranylgeranyl cysteine) is attached at Cys-117. Residues 118–120 (CIL) constitute a propeptide, removed in mature form.

As to expression, ubiquitous.

The protein resides in the cell membrane. Functionally, may serve as docking site to facilitate the association of other proteins to the plasma membrane. The sequence is that of Membrane-anchored ubiquitin-fold protein 5 (MUB5) from Arabidopsis thaliana (Mouse-ear cress).